Consider the following 123-residue polypeptide: MPTIQQLIRTERKRLTRKTKSPALRSCPERRGVCTRVYTSTPKKPNSALRKVARVRLTSGFEVTAYIPGIGHNLQEHSVVLLRGGRVKDLPGVRYHIIRGTLDTAGVKDRRQSRSKYGAKVPK.

D89 is modified (3-methylthioaspartic acid).

It belongs to the universal ribosomal protein uS12 family. As to quaternary structure, part of the 30S ribosomal subunit. Contacts proteins S8 and S17. May interact with IF1 in the 30S initiation complex.

With S4 and S5 plays an important role in translational accuracy. Functionally, interacts with and stabilizes bases of the 16S rRNA that are involved in tRNA selection in the A site and with the mRNA backbone. Located at the interface of the 30S and 50S subunits, it traverses the body of the 30S subunit contacting proteins on the other side and probably holding the rRNA structure together. The combined cluster of proteins S8, S12 and S17 appears to hold together the shoulder and platform of the 30S subunit. This Prochlorococcus marinus (strain MIT 9211) protein is Small ribosomal subunit protein uS12.